Consider the following 660-residue polypeptide: Phosphatidylinositol-binding clathrin assembly protein (660 aa).

At Ser-2 the chain carries N-acetylserine. Residues Gln-14–Phe-145 form the ENTH domain. A phosphoserine mark is found at Ser-16 and Ser-20. The segment at Lys-221–Thr-294 is interaction with PIMREG. A Glycyl lysine isopeptide (Lys-Gly) (interchain with G-Cter in SUMO2) cross-link involves residue Lys-238. Phosphoserine is present on residues Ser-303 and Ser-315. A compositionally biased stretch (polar residues) spans Gly-556–Gln-566. The interval Gly-556–Pro-580 is disordered.

It belongs to the PICALM/SNAP91 family. Binds to clathrin; involves primarily the C-terminal sequences, but the full-length protein is required for full binding capacity. Binds phosphatidylinositol 4,5- bisphosphate. Interacts with PIMREG; this interaction may change the subcellular location into the nucleus. Interacts with AP2A1 (via its alpha-appendage domain). Interacts (via N-terminus) with VAMP2; VAMP3; VAMP7 and VAMP8 (Via N-terminus). Interacts with LC3/MAP1LC3A. Skins and livers of 1-week-old mice.

It is found in the cell membrane. Its subcellular location is the membrane. The protein resides in the clathrin-coated pit. It localises to the golgi apparatus. The protein localises to the cytoplasmic vesicle. It is found in the clathrin-coated vesicle. Its subcellular location is the nucleus. Its function is as follows. Cytoplasmic adapter protein that plays a critical role in clathrin-mediated endocytosis which is important in processes such as internalization of cell receptors, synaptic transmission or removal of apoptotic cells. Recruits AP-2 and attaches clathrin triskelions to the cytoplasmic side of plasma membrane leading to clathrin-coated vesicles (CCVs) assembly. Furthermore, regulates clathrin-coated vesicle size and maturation by directly sensing and driving membrane curvature. In addition to binding to clathrin, mediates the endocytosis of small R-SNARES (Soluble NSF Attachment Protein REceptors) between plasma membranes and endosomes including VAMP2, VAMP3, VAMP4, VAMP7 or VAMP8. In turn, PICALM-dependent SNARE endocytosis is required for the formation and maturation of autophagic precursors. Modulates thereby autophagy and the turnover of autophagy substrates such as MAPT/TAU or amyloid precursor protein cleaved C-terminal fragment (APP-CTF). The protein is Phosphatidylinositol-binding clathrin assembly protein (Picalm) of Mus musculus (Mouse).